A 204-amino-acid chain; its full sequence is CASP-like protein 4B4 (204 aa).

The Cytoplasmic portion of the chain corresponds to 1–60 (MSAAVAASSGAPAADVEKGAAAADANVDGGGAPAAAAASGEGVVSAVVRRWRRQDLLEKS). The chain crosses the membrane as a helical span at residues 61–81 (GSALRVAAWAFSLLAFVVMGA). Over 82–98 (NDHGDWRQFEHYEEYRY) the chain is Extracellular. Residues 99–119 (VVAIGVLAFIYTTLQLVRHGV) form a helical membrane-spanning segment. Residues 120–130 (RLTGGQDLQGK) lie on the Cytoplasmic side of the membrane. Residues 131–151 (VAVLVDFAGDQVTAYLLMSAV) traverse the membrane as a helical segment. Residues 152–175 (SAAIPITNRMREGADNVFTDSSAA) lie on the Extracellular side of the membrane. Residues 176-196 (SISMAFFAFLCLALSALVSGF) form a helical membrane-spanning segment. At 197–204 (KLAKQTYI) the chain is on the cytoplasmic side.

Belongs to the Casparian strip membrane proteins (CASP) family. In terms of assembly, homodimer and heterodimers.

It is found in the cell membrane. This is CASP-like protein 4B4 from Oryza sativa subsp. japonica (Rice).